We begin with the raw amino-acid sequence, 223 residues long: uncharacterized protein (223 aa).

This sequence to M.jannaschii MJ0575.

This is an uncharacterized protein from Methanocaldococcus jannaschii (strain ATCC 43067 / DSM 2661 / JAL-1 / JCM 10045 / NBRC 100440) (Methanococcus jannaschii).